Reading from the N-terminus, the 248-residue chain is MRIQVDTHTHTYASGHAYSTIIENAFAASKLGLPMFCTTDHASSMPGAPHYWFFNNQRVLPRFIHNVAIVRGCEANICNDGEIDIPLSVDSHLDWVIASFHEPVFPSKDSLVHTQALIKVIRSNRVDALGHLGNPNFDFDFEAVIACAAEYNVAIELNNTSLKGETRIGSIDRCYEIAKVAKKLGAYVTTGSDAHFCEDIGKFSKVEQLIDDIDFPLDKVITHTPKQFLDFLALRGRAPIEEFKKLMV.

Positions 8, 10, 16, 41, 74, 101, 131, 193, and 195 each coordinate Zn(2+).

It belongs to the PHP family. Zn(2+) is required as a cofactor.

This chain is Probable phosphatase VFMJ11_A0899, found in Aliivibrio fischeri (strain MJ11) (Vibrio fischeri).